Reading from the N-terminus, the 151-residue chain is SsrA-binding protein (151 aa).

It belongs to the SmpB family.

The protein localises to the cytoplasm. Required for rescue of stalled ribosomes mediated by trans-translation. Binds to transfer-messenger RNA (tmRNA), required for stable association of tmRNA with ribosomes. tmRNA and SmpB together mimic tRNA shape, replacing the anticodon stem-loop with SmpB. tmRNA is encoded by the ssrA gene; the 2 termini fold to resemble tRNA(Ala) and it encodes a 'tag peptide', a short internal open reading frame. During trans-translation Ala-aminoacylated tmRNA acts like a tRNA, entering the A-site of stalled ribosomes, displacing the stalled mRNA. The ribosome then switches to translate the ORF on the tmRNA; the nascent peptide is terminated with the 'tag peptide' encoded by the tmRNA and targeted for degradation. The ribosome is freed to recommence translation, which seems to be the essential function of trans-translation. The chain is SsrA-binding protein from Nitrosomonas europaea (strain ATCC 19718 / CIP 103999 / KCTC 2705 / NBRC 14298).